A 262-amino-acid polypeptide reads, in one-letter code: METLSYSQIKKRKADFDEDISKRARQLPVGEQLPLSRLLQYSDKQQLFTILLQCVEKHPDLARDIRGILPAPSMDTCVETLRKLLINLNDSFPYGGDKRGDYAFNRIREKYMAVLHALNDMVPCYLPPYSTCFEKNITFLDAATNVVHELPEFHNPNHNVYKSQAYYELTGAWLVVLRQLEDRPVVPLLPLEELEEHNKTSQNRMEEALNYLKQLQKNEPLVHERSHTFQQTNPQNNFHRHTNSMNIGNDNGMGWHSMHQYI.

Belongs to the cut8/STS1 family. In terms of assembly, binds the proteasome. The N-terminal part (residues 1 to 72) is polyubiquitinated by rhp6, which is required for the interaction with the proteasome.

Its subcellular location is the nucleus envelope. Functionally, together with nucleoporin alm1, tethers the proteasome to the nuclear envelope. Involved in ubiquitin-mediated protein degradation and facilitates the degradation of nuclear proteins like mitotic cyclin and cut2. Required for normal progression of anaphase. This is Tethering factor for nuclear proteasome cut8 from Schizosaccharomyces pombe (strain 972 / ATCC 24843) (Fission yeast).